The following is a 264-amino-acid chain: Thymidylate synthase (264 aa).

A dUMP-binding site is contributed by Arg21. Residue His51 coordinates (6R)-5,10-methylene-5,6,7,8-tetrahydrofolate. 126-127 (RR) is a dUMP binding site. The active-site Nucleophile is Cys146. DUMP contacts are provided by residues 166–169 (RSAD), Asn177, and 207–209 (HLY). Asp169 lines the (6R)-5,10-methylene-5,6,7,8-tetrahydrofolate pocket. (6R)-5,10-methylene-5,6,7,8-tetrahydrofolate is bound at residue Ala263.

It belongs to the thymidylate synthase family. Bacterial-type ThyA subfamily. In terms of assembly, homodimer.

It localises to the cytoplasm. The enzyme catalyses dUMP + (6R)-5,10-methylene-5,6,7,8-tetrahydrofolate = 7,8-dihydrofolate + dTMP. Its pathway is pyrimidine metabolism; dTTP biosynthesis. Catalyzes the reductive methylation of 2'-deoxyuridine-5'-monophosphate (dUMP) to 2'-deoxythymidine-5'-monophosphate (dTMP) while utilizing 5,10-methylenetetrahydrofolate (mTHF) as the methyl donor and reductant in the reaction, yielding dihydrofolate (DHF) as a by-product. This enzymatic reaction provides an intracellular de novo source of dTMP, an essential precursor for DNA biosynthesis. This Hahella chejuensis (strain KCTC 2396) protein is Thymidylate synthase.